A 757-amino-acid polypeptide reads, in one-letter code: Serine/threonine-protein phosphatase with EF-hands 2 (757 aa).

The 26-residue stretch at 21–46 (KAAALIQRWYRRYMARLEMRRRCTWN) folds into the IQ domain. Residues 128-544 (ATALVEAFRL…PHIVQYQANK (417 aa)) are catalytic. Mn(2+)-binding residues include Asp179, His181, Asp208, and Asn240. Residue His241 is the Proton donor of the active site. Mn(2+) is bound at residue His292. The disordered stretch occupies residues 318–349 (CKTRKESENREEQKRKDNQTSSGQKPTPWFLP). Positions 321 to 335 (RKESENREEQKRKDN) are enriched in basic and acidic residues. His492 is a binding site for Mn(2+). EF-hand domains lie at 572–607 (AHSS…VLHL), 656–691 (RNRS…FSSH), and 696–731 (ITDD…VEQS). Positions 585, 587, 589, 596, 669, 671, 673, 680, 709, 711, 713, 715, and 720 each coordinate Ca(2+).

Belongs to the PPP phosphatase family. Mn(2+) is required as a cofactor. In terms of tissue distribution, detected in retina, more specifically in photoreceptors.

The catalysed reaction is O-phospho-L-seryl-[protein] + H2O = L-seryl-[protein] + phosphate. It catalyses the reaction O-phospho-L-threonyl-[protein] + H2O = L-threonyl-[protein] + phosphate. Its activity is regulated as follows. Activated by calcium. In terms of biological role, may play a role in phototransduction. May dephosphorylate photoactivated rhodopsin. May function as a calcium sensing regulator of ionic currents, energy production or synaptic transmission. This is Serine/threonine-protein phosphatase with EF-hands 2 (Ppef2) from Mus musculus (Mouse).